A 454-amino-acid chain; its full sequence is Bifunctional protein GlmU (454 aa).

Residues 1-232 (MTDRTCLSIV…VDNVIGINNR (232 aa)) form a pyrophosphorylase region. UDP-N-acetyl-alpha-D-glucosamine contacts are provided by residues 11–14 (LAAG), K25, Q78, and 83–84 (GT). A Mg(2+)-binding site is contributed by D108. UDP-N-acetyl-alpha-D-glucosamine contacts are provided by G144, E158, N173, and N230. N230 is a Mg(2+) binding site. Positions 233-253 (VELAEAEAIWQQRKRREMMLA) are linker. The interval 254-454 (GVTLIAPETV…AIKAAKTATK (201 aa)) is N-acetyltransferase. The UDP-N-acetyl-alpha-D-glucosamine site is built by R319 and K337. H349 acts as the Proton acceptor in catalysis. UDP-N-acetyl-alpha-D-glucosamine is bound by residues Y352 and N363. Acetyl-CoA contacts are provided by residues A366, 372–373 (NY), S391, S409, and R426.

This sequence in the N-terminal section; belongs to the N-acetylglucosamine-1-phosphate uridyltransferase family. In the C-terminal section; belongs to the transferase hexapeptide repeat family. In terms of assembly, homotrimer. Mg(2+) is required as a cofactor.

It localises to the cytoplasm. It carries out the reaction alpha-D-glucosamine 1-phosphate + acetyl-CoA = N-acetyl-alpha-D-glucosamine 1-phosphate + CoA + H(+). The catalysed reaction is N-acetyl-alpha-D-glucosamine 1-phosphate + UTP + H(+) = UDP-N-acetyl-alpha-D-glucosamine + diphosphate. It functions in the pathway nucleotide-sugar biosynthesis; UDP-N-acetyl-alpha-D-glucosamine biosynthesis; N-acetyl-alpha-D-glucosamine 1-phosphate from alpha-D-glucosamine 6-phosphate (route II): step 2/2. It participates in nucleotide-sugar biosynthesis; UDP-N-acetyl-alpha-D-glucosamine biosynthesis; UDP-N-acetyl-alpha-D-glucosamine from N-acetyl-alpha-D-glucosamine 1-phosphate: step 1/1. Its pathway is bacterial outer membrane biogenesis; LPS lipid A biosynthesis. Catalyzes the last two sequential reactions in the de novo biosynthetic pathway for UDP-N-acetylglucosamine (UDP-GlcNAc). The C-terminal domain catalyzes the transfer of acetyl group from acetyl coenzyme A to glucosamine-1-phosphate (GlcN-1-P) to produce N-acetylglucosamine-1-phosphate (GlcNAc-1-P), which is converted into UDP-GlcNAc by the transfer of uridine 5-monophosphate (from uridine 5-triphosphate), a reaction catalyzed by the N-terminal domain. This is Bifunctional protein GlmU from Brucella anthropi (strain ATCC 49188 / DSM 6882 / CCUG 24695 / JCM 21032 / LMG 3331 / NBRC 15819 / NCTC 12168 / Alc 37) (Ochrobactrum anthropi).